Reading from the N-terminus, the 79-residue chain is Translational regulator CsrA (79 aa).

It belongs to the CsrA/RsmA family. Homodimer; the beta-strands of each monomer intercalate to form a hydrophobic core, while the alpha-helices form wings that extend away from the core.

It is found in the cytoplasm. In terms of biological role, a translational regulator that binds mRNA to regulate translation initiation and/or mRNA stability. Usually binds in the 5'-UTR at or near the Shine-Dalgarno sequence preventing ribosome-binding, thus repressing translation. Its main target seems to be the major flagellin gene, while its function is anatagonized by FliW. The sequence is that of Translational regulator CsrA from Leptospira biflexa serovar Patoc (strain Patoc 1 / Ames).